Here is a 257-residue protein sequence, read N- to C-terminus: Imidazole glycerol phosphate synthase subunit HisF (257 aa).

Active-site residues include aspartate 11 and aspartate 130.

This sequence belongs to the HisA/HisF family. As to quaternary structure, heterodimer of HisH and HisF.

The protein localises to the cytoplasm. It catalyses the reaction 5-[(5-phospho-1-deoxy-D-ribulos-1-ylimino)methylamino]-1-(5-phospho-beta-D-ribosyl)imidazole-4-carboxamide + L-glutamine = D-erythro-1-(imidazol-4-yl)glycerol 3-phosphate + 5-amino-1-(5-phospho-beta-D-ribosyl)imidazole-4-carboxamide + L-glutamate + H(+). The protein operates within amino-acid biosynthesis; L-histidine biosynthesis; L-histidine from 5-phospho-alpha-D-ribose 1-diphosphate: step 5/9. Functionally, IGPS catalyzes the conversion of PRFAR and glutamine to IGP, AICAR and glutamate. The HisF subunit catalyzes the cyclization activity that produces IGP and AICAR from PRFAR using the ammonia provided by the HisH subunit. The polypeptide is Imidazole glycerol phosphate synthase subunit HisF (Proteus mirabilis (strain HI4320)).